The chain runs to 540 residues: 2-isopropylmalate synthase (540 aa).

The 262-residue stretch at 8 to 269 folds into the Pyruvate carboxyltransferase domain; sequence VLIFDTTLRD…YFNPFFGRAE (262 aa). 4 residues coordinate Mn(2+): Asp-17, His-208, His-210, and Asn-244. The interval 408-540 is regulatory domain; the sequence is QLKLVQVSCG…ATPLDASPTL (133 aa).

It belongs to the alpha-IPM synthase/homocitrate synthase family. LeuA type 1 subfamily. In terms of assembly, homodimer. Requires Mn(2+) as cofactor.

The protein resides in the cytoplasm. It carries out the reaction 3-methyl-2-oxobutanoate + acetyl-CoA + H2O = (2S)-2-isopropylmalate + CoA + H(+). It participates in amino-acid biosynthesis; L-leucine biosynthesis; L-leucine from 3-methyl-2-oxobutanoate: step 1/4. Its function is as follows. Catalyzes the condensation of the acetyl group of acetyl-CoA with 3-methyl-2-oxobutanoate (2-ketoisovalerate) to form 3-carboxy-3-hydroxy-4-methylpentanoate (2-isopropylmalate). The protein is 2-isopropylmalate synthase of Synechococcus sp. (strain WH7803).